The following is a 688-amino-acid chain: MARQFSLEKTRNIGIIAHIDAGKTTTTERILFHTGKIHKIGETHDGASQMDWMEQEQERGITITSAATTAFWKNHRINIIDTPGHVDFTVEVSRSLRVLDGAVTVIDAQAGVEPQTETVWRQASEYKVPRVIFVNKMDKVGADFAYAIETLKQRLGVHASAIQWPIGSENDFNGIIDLVEMNAFEYDNTSQETGKVVSIPSDLESITQTKRKELIETLSTLDEELMIYYLEEKPISSEMLKNSIRKATLQASFFPVLCGSSFKNKGVVKMLDAVVDYLPAPCDVAAIVGFDSDNQEIVRTGLDEEPFTALAFKVMTDPYVGKLTFFRIYSGSVKAGSYVTNTTKGTKERFGRLLQMHANSREEVKEAYTGDILAVVGLKATTTGDTLASEGQTIILESMNFPEPVIEIAVEPKTKADQDKMGIALAKLAEEDPTFKVFSNHETGQTIIAGMGELHLDIIIERLKREFKVQANVTEPQVAYRETITQETETEGKFIRQSGGRGQYGHVWMRFEPNPGKGFEFVNKIVGGVVPREYVPAVQKGIQEALAGGILAGYQIIDVKATLFDGSYHDVDSSEIAFKIAASMALKETKTKGNPVILEPIMDVEVVTPNDYVGNVIGDLTSRRGRLENQESRTNAVAIRAFVPLSEMFGYATVLRSNTQGRATFIMQFAKYEKAPKSITEEIIKKRA.

Residues 8–282 (EKTRNIGIIA…AVVDYLPAPC (275 aa)) form the tr-type G domain. GTP is bound by residues 17–24 (AHIDAGKT), 81–85 (DTPGH), and 135–138 (NKMD).

It belongs to the TRAFAC class translation factor GTPase superfamily. Classic translation factor GTPase family. EF-G/EF-2 subfamily.

It is found in the cytoplasm. Catalyzes the GTP-dependent ribosomal translocation step during translation elongation. During this step, the ribosome changes from the pre-translocational (PRE) to the post-translocational (POST) state as the newly formed A-site-bound peptidyl-tRNA and P-site-bound deacylated tRNA move to the P and E sites, respectively. Catalyzes the coordinated movement of the two tRNA molecules, the mRNA and conformational changes in the ribosome. The sequence is that of Elongation factor G from Aster yellows witches'-broom phytoplasma (strain AYWB).